Here is a 112-residue protein sequence, read N- to C-terminus: Large ribosomal subunit protein eL30z (112 aa).

This sequence belongs to the eukaryotic ribosomal protein eL30 family.

The polypeptide is Large ribosomal subunit protein eL30z (RPL30A) (Arabidopsis thaliana (Mouse-ear cress)).